The chain runs to 57 residues: Metallothionein (57 aa).

The protein belongs to the metallothionein superfamily. Type 14 family.

Functionally, this protein complexes cadmium, zinc and copper. The protein is Metallothionein (mtnA) of Thermostichus vulcanus (Synechococcus vulcanus).